A 325-amino-acid chain; its full sequence is Tetraacyldisaccharide 4'-kinase (325 aa).

ATP is bound at residue 51–58 (VVGGAGKT).

The protein belongs to the LpxK family.

The enzyme catalyses a lipid A disaccharide + ATP = a lipid IVA + ADP + H(+). It functions in the pathway glycolipid biosynthesis; lipid IV(A) biosynthesis; lipid IV(A) from (3R)-3-hydroxytetradecanoyl-[acyl-carrier-protein] and UDP-N-acetyl-alpha-D-glucosamine: step 6/6. In terms of biological role, transfers the gamma-phosphate of ATP to the 4'-position of a tetraacyldisaccharide 1-phosphate intermediate (termed DS-1-P) to form tetraacyldisaccharide 1,4'-bis-phosphate (lipid IVA). This is Tetraacyldisaccharide 4'-kinase from Paramagnetospirillum magneticum (strain ATCC 700264 / AMB-1) (Magnetospirillum magneticum).